The sequence spans 350 residues: uncharacterized protein (350 aa).

In terms of domain architecture, OBG-type G spans 171–334 (PTVVIAGYPN…LKERLKKIAI (164 aa)). Residues 177 to 184 (GYPNVGKS), 219 to 223 (DTPGL), and 286 to 289 (NKID) each bind GTP.

Belongs to the TRAFAC class OBG-HflX-like GTPase superfamily. OBG GTPase family. NOG subfamily.

This is an uncharacterized protein from Methanocaldococcus jannaschii (strain ATCC 43067 / DSM 2661 / JAL-1 / JCM 10045 / NBRC 100440) (Methanococcus jannaschii).